Reading from the N-terminus, the 373-residue chain is CXADR-like membrane protein (373 aa).

Positions 1–17 (MSLFFLWLVSYYVGTLG) are cleaved as a signal peptide. 2 consecutive Ig-like C2-type domains span residues 18-126 (THTE…VILK) and 134-223 (PKCE…VRVT). The Extracellular portion of the chain corresponds to 18–234 (THTEIKRVAE…QYVQSIGMVA (217 aa)). 2 disulfide bridges follow: Cys34–Cys110 and Cys152–Cys207. 2 N-linked (GlcNAc...) asparagine glycosylation sites follow: Asn73 and Asn196. A helical transmembrane segment spans residues 235–255 (GAVTGIVAGALLIFLLIWLLI). At 256 to 373 (RRKSKDRYEE…PSQSKAFQTV (118 aa)) the chain is on the cytoplasmic side. Over residues 263–280 (YEEEDRPNEIREDAEAPR) the composition is skewed to basic and acidic residues. Residues 263-373 (YEEEDRPNEI…PSQSKAFQTV (111 aa)) are disordered. Low complexity-rich tracts occupy residues 287-313 (SSSS…ASRS), 321-332 (AAPQQPGLAPQA), and 353-363 (LTKAETTLSTT). Polar residues predominate over residues 364–373 (PSQSKAFQTV).

Predominantly expressed in epithelial cells within different tissues and in the white adipose tissue. Expressed at high levels in the heart and brain, at intermediate levels in the lung, skeletal muscle, kidney and testis and at low levels in the liver and spleen.

It is found in the cell junction. The protein resides in the tight junction. Its subcellular location is the cell membrane. In terms of biological role, may be involved in the cell-cell adhesion. May play a role in adipocyte differentiation and development of obesity. Is required for normal small intestine development. The protein is CXADR-like membrane protein (Clmp) of Mus musculus (Mouse).